Reading from the N-terminus, the 385-residue chain is Chaperone protein DnaJ (385 aa).

A J domain is found at 5–70 (DYYEVLGVSK…ERKAAYDRYG (66 aa)). A CR-type zinc finger spans residues 143 to 221 (GLHKTINVPT…CNGHGRVEKD (79 aa)). C156, C159, C173, C176, C195, C198, C209, and C212 together coordinate Zn(2+). CXXCXGXG motif repeat units follow at residues 156–163 (CTSCEGTG), 173–180 (CPTCSGMG), 195–202 (CPTCSGLG), and 209–216 (CKTCNGHG).

Belongs to the DnaJ family. As to quaternary structure, homodimer. The cofactor is Zn(2+).

The protein localises to the cytoplasm. Its function is as follows. Participates actively in the response to hyperosmotic and heat shock by preventing the aggregation of stress-denatured proteins and by disaggregating proteins, also in an autonomous, DnaK-independent fashion. Unfolded proteins bind initially to DnaJ; upon interaction with the DnaJ-bound protein, DnaK hydrolyzes its bound ATP, resulting in the formation of a stable complex. GrpE releases ADP from DnaK; ATP binding to DnaK triggers the release of the substrate protein, thus completing the reaction cycle. Several rounds of ATP-dependent interactions between DnaJ, DnaK and GrpE are required for fully efficient folding. Also involved, together with DnaK and GrpE, in the DNA replication of plasmids through activation of initiation proteins. The sequence is that of Chaperone protein DnaJ from Ruegeria sp. (strain TM1040) (Silicibacter sp.).